Consider the following 115-residue polypeptide: Large ribosomal subunit protein P2 (115 aa).

Met1 carries the post-translational modification N-acetylmethionine. A phosphoserine mark is found at Ser17 and Ser19. Position 21 is an N6-acetyllysine; alternate (Lys21). Lys21 carries the N6-succinyllysine; alternate modification. Residues 76–90 (APGSAAPAAGSAPAA) are compositionally biased toward low complexity. Residues 76 to 115 (APGSAAPAAGSAPAAAEEKKDEKKEESEESDDDMGFGLFD) are disordered. Phosphoserine is present on residues Ser79 and Ser86. The segment covering 91–101 (AEEKKDEKKEE) has biased composition (basic and acidic residues). Phosphoserine occurs at positions 102 and 105.

This sequence belongs to the eukaryotic ribosomal protein P1/P2 family. Heterodimer with RPLP1 at the lateral ribosomal stalk of the large ribosomal subunit.

In terms of biological role, plays an important role in the elongation step of protein synthesis. The chain is Large ribosomal subunit protein P2 (Rplp2) from Mus musculus (Mouse).